Consider the following 452-residue polypeptide: Ribosomal protein uS12 methylthiotransferase RimO (452 aa).

The 116-residue stretch at Gly-3–Pro-118 folds into the MTTase N-terminal domain. Cys-12, Cys-48, Cys-77, Cys-149, Cys-153, and Cys-156 together coordinate [4Fe-4S] cluster. The Radical SAM core domain occupies Leu-135 to Arg-382. The 69-residue stretch at Ala-384–Thr-452 folds into the TRAM domain.

The protein belongs to the methylthiotransferase family. RimO subfamily. The cofactor is [4Fe-4S] cluster.

The protein localises to the cytoplasm. It catalyses the reaction L-aspartate(89)-[ribosomal protein uS12]-hydrogen + (sulfur carrier)-SH + AH2 + 2 S-adenosyl-L-methionine = 3-methylsulfanyl-L-aspartate(89)-[ribosomal protein uS12]-hydrogen + (sulfur carrier)-H + 5'-deoxyadenosine + L-methionine + A + S-adenosyl-L-homocysteine + 2 H(+). In terms of biological role, catalyzes the methylthiolation of an aspartic acid residue of ribosomal protein uS12. This chain is Ribosomal protein uS12 methylthiotransferase RimO, found in Polynucleobacter necessarius subsp. necessarius (strain STIR1).